A 282-amino-acid polypeptide reads, in one-letter code: Pantothenate synthetase (282 aa).

30-37 (MGALHQGH) lines the ATP pocket. Catalysis depends on His-37, which acts as the Proton donor. Gln-61 contributes to the (R)-pantoate binding site. Beta-alanine is bound at residue Gln-61. 149–152 (GEKD) is an ATP binding site. (R)-pantoate is bound at residue Gln-155. ATP is bound by residues Leu-178 and 186 to 189 (MSSR).

Belongs to the pantothenate synthetase family. In terms of assembly, homodimer.

It localises to the cytoplasm. It carries out the reaction (R)-pantoate + beta-alanine + ATP = (R)-pantothenate + AMP + diphosphate + H(+). The protein operates within cofactor biosynthesis; (R)-pantothenate biosynthesis; (R)-pantothenate from (R)-pantoate and beta-alanine: step 1/1. Its function is as follows. Catalyzes the condensation of pantoate with beta-alanine in an ATP-dependent reaction via a pantoyl-adenylate intermediate. In Flavobacterium psychrophilum (strain ATCC 49511 / DSM 21280 / CIP 103535 / JIP02/86), this protein is Pantothenate synthetase.